Here is a 222-residue protein sequence, read N- to C-terminus: Phosphoribosylformylglycinamidine synthase subunit PurQ (222 aa).

A Glutamine amidotransferase type-1 domain is found at 3–222 (SAVIQLPGLN…LFESVLGRAA (220 aa)). The active-site Nucleophile is the C86. Residues H196 and E198 contribute to the active site.

Part of the FGAM synthase complex composed of 1 PurL, 1 PurQ and 2 PurS subunits.

The protein resides in the cytoplasm. It carries out the reaction N(2)-formyl-N(1)-(5-phospho-beta-D-ribosyl)glycinamide + L-glutamine + ATP + H2O = 2-formamido-N(1)-(5-O-phospho-beta-D-ribosyl)acetamidine + L-glutamate + ADP + phosphate + H(+). The catalysed reaction is L-glutamine + H2O = L-glutamate + NH4(+). The protein operates within purine metabolism; IMP biosynthesis via de novo pathway; 5-amino-1-(5-phospho-D-ribosyl)imidazole from N(2)-formyl-N(1)-(5-phospho-D-ribosyl)glycinamide: step 1/2. In terms of biological role, part of the phosphoribosylformylglycinamidine synthase complex involved in the purines biosynthetic pathway. Catalyzes the ATP-dependent conversion of formylglycinamide ribonucleotide (FGAR) and glutamine to yield formylglycinamidine ribonucleotide (FGAM) and glutamate. The FGAM synthase complex is composed of three subunits. PurQ produces an ammonia molecule by converting glutamine to glutamate. PurL transfers the ammonia molecule to FGAR to form FGAM in an ATP-dependent manner. PurS interacts with PurQ and PurL and is thought to assist in the transfer of the ammonia molecule from PurQ to PurL. The polypeptide is Phosphoribosylformylglycinamidine synthase subunit PurQ (Chelativorans sp. (strain BNC1)).